The chain runs to 95 residues: RING finger protein Z (95 aa).

A lipid anchor (N-myristoyl glycine; by host) is attached at Gly-2. Residues 38–74 form an RING-type; atypical zinc finger; sequence CKRCWFATKGLIACSDHYLCLNCLTIMLSDGNFCEVC. A PTAP/PSAP motif motif is present at residues 88–91; sequence PSAP.

The protein belongs to the arenaviridae Z protein family. Interacts with protein NP; this interaction probably directs the encapsidated genome to budding sites. Interacts (via RING domain) with polymerase L; this interaction inhibits viral transcription and replication, Z partially blocks the product exit tunnel for the releasing nascent RNA product. Interacts with the glycoprotein complex; this interaction plays a role in virion budding. Interacts with host eIF4E; this interaction results in eIF4E reduced affinity for its substrate, the 5'-m7 G cap structure. Interacts (via late-budding domain) with host TSG101; this interaction is essential for budding and release of viral particles. Interacts with host RPLP0; this interaction may serve to load ribosome-like particles inside the virion. Interacts with host PML; this interaction induces PML bodies redistribution in the cytoplasm upon viral infection. In terms of processing, myristoylation is required for the role of RING finger protein Z in assembly and budding.

It is found in the virion. It localises to the host cytoplasm. The protein localises to the host perinuclear region. The protein resides in the host cell membrane. Functionally, plays a crucial role in virion assembly and budding. Expressed late in the virus life cycle, it acts as an inhibitor of viral transcription and RNA synthesis by interacting with the viral polymerase L. Presumably recruits the NP encapsidated genome to cellular membranes at budding sites via direct interaction with NP. Plays critical roles in the final steps of viral release by interacting with host TSG101, a member of the vacuolar protein-sorting pathway and using other cellular host proteins involved in vesicle formation pathway. The budding of the virus progeny occurs after association of protein Z with the viral glycoprotein complex SSP-GP1-GP2 at the cell periphery, step that requires myristoylation of protein Z. Also selectively represses protein production by associating with host eIF4E. In cell-based minigenome assay, has an inhibitory effect on the ribonucleoprotein machinery (vRNP), which is responsible for the replication and transcription of the viral genome. The protein is RING finger protein Z of Sooretamys angouya (Paraguayan rice rat).